We begin with the raw amino-acid sequence, 214 residues long: Putative glucose-6-phosphate isomerase 1 (214 aa).

The Fe cation site is built by His92, His94, Glu101, and His140.

This sequence belongs to the archaeal-type GPI family. In terms of assembly, homodimer. Fe cation is required as a cofactor.

Its subcellular location is the cytoplasm. The catalysed reaction is alpha-D-glucose 6-phosphate = beta-D-fructose 6-phosphate. It functions in the pathway carbohydrate degradation; glycolysis; D-glyceraldehyde 3-phosphate and glycerone phosphate from D-glucose: step 2/4. In Rhizobium meliloti (strain 1021) (Ensifer meliloti), this protein is Putative glucose-6-phosphate isomerase 1 (pgiA1).